The sequence spans 131 residues: Small ribosomal subunit protein bS6 (131 aa).

The tract at residues 96–131 (VTEASPMAKAKDERDSRRGPAGDRSYDEANAEEIAE) is disordered. Residues 104–122 (KAKDERDSRRGPAGDRSYD) show a composition bias toward basic and acidic residues.

It belongs to the bacterial ribosomal protein bS6 family.

Binds together with bS18 to 16S ribosomal RNA. The chain is Small ribosomal subunit protein bS6 from Shewanella sp. (strain ANA-3).